Reading from the N-terminus, the 336-residue chain is Ultraviolet-sensitive opsin (336 aa).

At 1–29 the chain is on the extracellular side; that stretch reads MDAWTYQFGNLSKISPFEGPQYHLAPKWA. Asparagine 10 carries an N-linked (GlcNAc...) asparagine glycan. A helical transmembrane segment spans residues 30–54; sequence FYLQAAFMGFVFFVGTPLNAIVLFV. Residues 55-66 are Cytoplasmic-facing; the sequence is TMKYKKLRQPLN. The chain crosses the membrane as a helical span at residues 67–91; sequence YILVNISLGGFIFDTFSVSQVFFSA. The Extracellular portion of the chain corresponds to 92 to 106; the sequence is LRGYYFFGYTLCAME. The cysteines at positions 103 and 180 are disulfide-linked. A helical transmembrane segment spans residues 107 to 126; the sequence is AAMGSIAGLVTGWSLAVLAF. At 127-145 the chain is on the cytoplasmic side; it reads ERYVVICKPFGSFKFGQSQ. A helical transmembrane segment spans residues 146-169; it reads ALGAVALTWIIGIGCATPPFWGWS. Topologically, residues 170 to 195 are extracellular; that stretch reads RYIPEGIGTACGPDWYTKNEEYNTES. The chain crosses the membrane as a helical span at residues 196 to 223; it reads YTYFLLVSCFMMPIMIITFSYSQLLGAL. Residues 224-245 lie on the Cytoplasmic side of the membrane; it reads RAVAAQQAESASTQKAEKEVSR. A helical transmembrane segment spans residues 246–269; it reads MVVVMVGSFVVCYGPYAITALYFS. Residues 270–277 are Extracellular-facing; it reads YAEDSNKD. The chain crosses the membrane as a helical span at residues 278 to 302; that stretch reads YRLVAIPSLFSKSSCVYNPLIYAFM. Residue lysine 289 is modified to N6-(retinylidene)lysine. Residues 303-336 are Cytoplasmic-facing; it reads NKQFNACIMETVFGKKIDESSEVSSKTETSSVSA.

The protein belongs to the G-protein coupled receptor 1 family. Opsin subfamily. Post-translationally, phosphorylated on some or all of the serine and threonine residues present in the C-terminal region.

Its subcellular location is the membrane. Functionally, visual pigments are the light-absorbing molecules that mediate vision. They consist of an apoprotein, opsin, covalently linked to cis-retinal. The protein is Ultraviolet-sensitive opsin of Carassius auratus (Goldfish).